Reading from the N-terminus, the 371-residue chain is MSNQHTLLISNLLPVGSNISTWWNFGSMLLTCLILQITTGFFLAIHYTANINLAFSSVTHIMRDVPYGWIMQNLHAIGASMFFICIYIHIARGLYYGLYMNKNVWLSGTTLLITLMATAFFGYVLPWGQMSFWAATVITNLLTAIPYLGTTITTWLWGGFSINDPTLTRFFALHFILPFAIISLSSIHIILLHNKGSNNPLGTNSDIDKIPFHPYHSYKDTLMTISLFILMFTILSFSPDLFNDPENFSKANPLVTPQHIKPEWYFLFAYGILRSIPNKLGGTLALLMSVTILMTAPFTHTSHMRPMTFRPLAQMAFWTLIATFITITWTASKPVEPPFIIISQMTSILYFLFFIMNPLLGWTENKIMMNN.

The next 4 membrane-spanning stretches (helical) occupy residues 25–45 (FGSM…FLAI), 69–90 (WIMQ…YIHI), 105–125 (WLSG…GYVL), and 170–190 (FFAL…IHII). His-75 and His-89 together coordinate heme b. Positions 174 and 188 each coordinate heme b. A ubiquinone is bound at residue His-193. A run of 4 helical transmembrane segments spans residues 218-238 (YKDT…LSFS), 280-300 (LGGT…PFTH), 312-332 (LAQM…WTAS), and 339-358 (FIII…IMNP).

The protein belongs to the cytochrome b family. As to quaternary structure, the cytochrome bc1 complex contains 3 respiratory subunits (MT-CYB, CYC1 and UQCRFS1), 2 core proteins (UQCRC1 and UQCRC2) and probably 6 low-molecular weight proteins. The cofactor is heme b.

Its subcellular location is the mitochondrion inner membrane. Functionally, component of the ubiquinol-cytochrome c reductase complex (complex III or cytochrome b-c1 complex) that is part of the mitochondrial respiratory chain. The b-c1 complex mediates electron transfer from ubiquinol to cytochrome c. Contributes to the generation of a proton gradient across the mitochondrial membrane that is then used for ATP synthesis. The protein is Cytochrome b (MT-CYB) of Sinomicrurus kelloggi (Kellogg's coral snake).